The sequence spans 74 residues: Small ribosomal subunit protein eS28 (74 aa).

It belongs to the eukaryotic ribosomal protein eS28 family.

This is Small ribosomal subunit protein eS28 from Halobacterium salinarum (strain ATCC 29341 / DSM 671 / R1).